A 378-amino-acid polypeptide reads, in one-letter code: Cytochrome b (378 aa).

The next 4 helical transmembrane spans lie at 34–54, 78–99, 114–134, and 179–199; these read FGSL…FLAM, WFLR…FIHV, WMIG…GYVL, and FFTF…IHLL. Residues histidine 84 and histidine 98 each contribute to the heme b site. 2 residues coordinate heme b: histidine 183 and histidine 197. Residue histidine 202 participates in a ubiquinone binding. Transmembrane regions (helical) follow at residues 227-247, 289-309, 321-341, and 348-368; these read YKDI…IWKF, LGGV…PFTH, LNQI…WIGA, and YVLT…INPL.

The protein belongs to the cytochrome b family. In terms of assembly, the main subunits of complex b-c1 are: cytochrome b, cytochrome c1 and the Rieske protein. It depends on heme b as a cofactor.

Its subcellular location is the mitochondrion inner membrane. Component of the ubiquinol-cytochrome c reductase complex (complex III or cytochrome b-c1 complex) that is part of the mitochondrial respiratory chain. The b-c1 complex mediates electron transfer from ubiquinol to cytochrome c. Contributes to the generation of a proton gradient across the mitochondrial membrane that is then used for ATP synthesis. This Aedes aegypti (Yellowfever mosquito) protein is Cytochrome b.